A 1877-amino-acid polypeptide reads, in one-letter code: Phosphatidylinositol 4-kinase stt4 (1877 aa).

Residues 1305-1491 (PDSDAASSPI…KPILDRVMDK (187 aa)) form the PIK helical domain. A pleckstrin homology (PH) domain conferring phosphoinositide binding specificity region spans residues 1492–1625 (MINSLSGEDK…EVWQSAIFKV (134 aa)). The region spanning 1593–1861 (DPEELAVNGT…LIEQSYANKR (269 aa)) is the PI3K/PI4K catalytic domain. The segment at 1599–1605 (VNGTEEE) is G-loop. Residues 1728-1736 (QFKDRHNGN) are catalytic loop. Residues 1747 to 1771 (HIDFGFIFDIAPGGITFESAPFKLT) form an activation loop region.

This sequence belongs to the PI3/PI4-kinase family. Type III PI4K subfamily.

It localises to the cytoplasm. The enzyme catalyses a 1,2-diacyl-sn-glycero-3-phospho-(1D-myo-inositol) + ATP = a 1,2-diacyl-sn-glycero-3-phospho-(1D-myo-inositol 4-phosphate) + ADP + H(+). Functionally, acts on phosphatidylinositol (PI) in the first committed step in the production of the second messenger inositol 1,4,5,-trisphosphate. The sequence is that of Phosphatidylinositol 4-kinase stt4 (stt4) from Schizosaccharomyces pombe (strain 972 / ATCC 24843) (Fission yeast).